Here is a 1283-residue protein sequence, read N- to C-terminus: Peroxisomal ATPase PEX1 (1283 aa).

The tract at residues 346–367 is disordered; that stretch reads SKTKQNVLSPEKEKQMSEPLDQ. The residue at position 354 (serine 354) is a Phosphoserine. Basic and acidic residues predominate over residues 355-367; sequence PEKEKQMSEPLDQ. ATP is bound by residues 599–606 and 881–888; these read GGKGSGKS and GPPGTGKT. 3 positions are modified to phosphoserine: serine 1181, serine 1209, and serine 1211. A disordered region spans residues 1260-1283; sequence FQNPKRRKNQSGTMFRPGQKVTLA.

This sequence belongs to the AAA ATPase family. In terms of assembly, homooligomer; homooligomerizes in the cytosol, interaction with PEX6 promotes dissociation of the homooligomer. Interacts with PEX6; forming the PEX1-PEX6 AAA ATPase complex, which is composed of a heterohexamer formed by a trimer of PEX1-PEX6 dimers. Interacts indirectly with PEX26, via its interaction with PEX6.

The protein localises to the cytoplasm. It is found in the cytosol. The protein resides in the peroxisome membrane. It carries out the reaction ATP + H2O = ADP + phosphate + H(+). In terms of biological role, component of the PEX1-PEX6 AAA ATPase complex, a protein dislocase complex that mediates the ATP-dependent extraction of the PEX5 receptor from peroxisomal membranes, an essential step for PEX5 recycling. Specifically recognizes PEX5 monoubiquitinated at 'Cys-11', and pulls it out of the peroxisome lumen through the PEX2-PEX10-PEX12 retrotranslocation channel. Extraction by the PEX1-PEX6 AAA ATPase complex is accompanied by unfolding of the TPR repeats and release of bound cargo from PEX5. The chain is Peroxisomal ATPase PEX1 from Homo sapiens (Human).